The primary structure comprises 339 residues: MAMQVQFEASTDTSAEEESFGPEPISRLEQCGINANDVKKLEEAGYHTVESVAHAPKKELLNIKGISEAKADKILAEAAKLVPMGFTTATEFHQRRSEIIQITTGSKELDKLLQGGIETGSITELFGEFRTGKTQLCHTLAVTCQLPIDRGGGEGKAMYIDTEGTFRPERLLAVAERYGLSGSDVLDNVAYARGFNTDHQTQLLYQASAMMAESRYALLIVDSATALYRTDYSGRGELSARQMHLARFLRMLLRLADEFGVAVVITNQVVAQVDGAAMFAADPKKPIGGNIIAHASTTRLYLRKGRGETRICKIYDSPCLPEAEAMFAINADGVGDAKE.

Residues 1-23 (MAMQVQFEASTDTSAEEESFGPE) form a disordered region. A HhH domain is found at 48–77 (TVESVAHAPKKELLNIKGISEAKADKILAE). Residue 127–134 (GEFRTGKT) participates in ATP binding.

It belongs to the RecA family. RAD51 subfamily. In terms of assembly, forms linear homooligomers, giving rise to a RAD51 nucleoprotein filament, which is essential for strand-pairing reactions during DNA recombination. Expressed at high levels in lymphoid and reproductive organs.

The protein resides in the nucleus. The protein localises to the cytoplasm. Its subcellular location is the chromosome. Functionally, plays an important role in homologous strand exchange, a key step in DNA repair through homologous recombination (HR). Binds to single-stranded DNA in an ATP-dependent manner to form nucleoprotein filaments which are essential for the homology search and strand exchange. Catalyzes the recognition of homology and strand exchange between homologous DNA partners to form a joint molecule between a processed DNA break and the repair template. Recruited to resolve stalled replication forks during replication stress. Also involved in interstrand cross-link repair. The chain is DNA repair protein RAD51 homolog 1 (RAD51A) from Gallus gallus (Chicken).